Consider the following 630-residue polypeptide: Membrane protein insertase YidC (630 aa).

The next 5 membrane-spanning stretches (helical) occupy residues 10 to 30 (LMFL…VMGP), 396 to 416 (MVGN…LILF), 470 to 490 (VPML…TVTI), 528 to 548 (LIGA…LYGF), and 571 to 591 (FFPI…VIYW).

This sequence belongs to the OXA1/ALB3/YidC family. Type 1 subfamily. As to quaternary structure, interacts with the Sec translocase complex via SecD. Specifically interacts with transmembrane segments of nascent integral membrane proteins during membrane integration.

The protein localises to the cell inner membrane. Functionally, required for the insertion and/or proper folding and/or complex formation of integral membrane proteins into the membrane. Involved in integration of membrane proteins that insert both dependently and independently of the Sec translocase complex, as well as at least some lipoproteins. Aids folding of multispanning membrane proteins. This chain is Membrane protein insertase YidC, found in Caulobacter sp. (strain K31).